The sequence spans 262 residues: Ninja-family protein 3 (262 aa).

A disordered region spans residues 48–69 (RRNSLTCNTSKEAAGQSPEEMN).

The protein belongs to the Ninja family.

It localises to the nucleus. In Zea mays (Maize), this protein is Ninja-family protein 3.